A 317-amino-acid chain; its full sequence is Metaxin-1 (317 aa).

Glycyl lysine isopeptide (Lys-Gly) (interchain with G-Cter in ubiquitin) cross-links involve residues Lys38, Lys41, and Lys78. The chain crosses the membrane as a helical span at residues 164–184; it reads EELEKELYREARECLTLLSQR.

This sequence belongs to the metaxin family. In terms of assembly, interacts with MTX2/metaxin-2. Associates with the mitochondrial contact site and cristae organizing system (MICOS) complex, composed of at least MICOS10/MIC10, CHCHD3/MIC19, CHCHD6/MIC25, APOOL/MIC27, IMMT/MIC60, APOO/MIC23/MIC26 and QIL1/MIC13. This complex was also known under the names MINOS or MitOS complex. The MICOS complex associates with mitochondrial outer membrane proteins SAMM50, MTX1 and MTX2 (together described as components of the mitochondrial outer membrane sorting assembly machinery (SAM) complex) and DNAJC11, mitochondrial inner membrane protein TMEM11 and with HSPA9. The MICOS and SAM complexes together with DNAJC11 are part of a large protein complex spanning both membranes termed the mitochondrial intermembrane space bridging (MIB) complex. Interacts with ARMC1. Post-translationally, ubiquitinated by PRKN during mitophagy, leading to its degradation and enhancement of mitophagy. Deubiquitinated by USP30.

The protein localises to the mitochondrion outer membrane. Functionally, involved in transport of proteins into the mitochondrion. Essential for embryonic development. In Macaca fascicularis (Crab-eating macaque), this protein is Metaxin-1 (MTX1).